Reading from the N-terminus, the 607-residue chain is Aspartate--tRNA(Asp/Asn) ligase (607 aa).

Glu176 lines the L-aspartate pocket. Positions 200 to 203 are aspartate; the sequence is QQFK. Arg222 and His456 together coordinate L-aspartate. Position 222–224 (222–224) interacts with ATP; that stretch reads RDE. Residue Glu496 coordinates ATP. Residue Arg503 participates in L-aspartate binding. ATP is bound at residue 548–551; it reads GIDR.

The protein belongs to the class-II aminoacyl-tRNA synthetase family. Type 1 subfamily. As to quaternary structure, homodimer.

It localises to the cytoplasm. It carries out the reaction tRNA(Asx) + L-aspartate + ATP = L-aspartyl-tRNA(Asx) + AMP + diphosphate. In terms of biological role, aspartyl-tRNA synthetase with relaxed tRNA specificity since it is able to aspartylate not only its cognate tRNA(Asp) but also tRNA(Asn). Reaction proceeds in two steps: L-aspartate is first activated by ATP to form Asp-AMP and then transferred to the acceptor end of tRNA(Asp/Asn). The polypeptide is Aspartate--tRNA(Asp/Asn) ligase (Parvibaculum lavamentivorans (strain DS-1 / DSM 13023 / NCIMB 13966)).